The following is a 110-amino-acid chain: Large ribosomal subunit protein uL22 (110 aa).

Belongs to the universal ribosomal protein uL22 family. In terms of assembly, part of the 50S ribosomal subunit.

Functionally, this protein binds specifically to 23S rRNA; its binding is stimulated by other ribosomal proteins, e.g. L4, L17, and L20. It is important during the early stages of 50S assembly. It makes multiple contacts with different domains of the 23S rRNA in the assembled 50S subunit and ribosome. Its function is as follows. The globular domain of the protein is located near the polypeptide exit tunnel on the outside of the subunit, while an extended beta-hairpin is found that lines the wall of the exit tunnel in the center of the 70S ribosome. In Mannheimia succiniciproducens (strain KCTC 0769BP / MBEL55E), this protein is Large ribosomal subunit protein uL22.